Reading from the N-terminus, the 473-residue chain is Pentatricopeptide repeat-containing protein At3g60050 (473 aa).

PPR repeat units lie at residues T148–T182, T183–P217, F218–P252, D253–P287, D288–P322, S323–P357, D358–P392, N393–P427, and N428–V462.

This sequence belongs to the PPR family. P subfamily.

The chain is Pentatricopeptide repeat-containing protein At3g60050 from Arabidopsis thaliana (Mouse-ear cress).